A 144-amino-acid chain; its full sequence is Large ribosomal subunit protein uL15 (144 aa).

Residues 1–57 (MLLNTLSPAAGSKHAPKRLGRGVGSGLGKTGGRGHKGQKSRSGGKVRPGFEGGQMPL) are disordered. Over residues 21–31 (RGVGSGLGKTG) the composition is skewed to gly residues. Residues 32–44 (GRGHKGQKSRSGG) show a composition bias toward basic residues.

Belongs to the universal ribosomal protein uL15 family. As to quaternary structure, part of the 50S ribosomal subunit.

Binds to the 23S rRNA. This Vibrio cholerae serotype O1 (strain ATCC 39541 / Classical Ogawa 395 / O395) protein is Large ribosomal subunit protein uL15.